The sequence spans 390 residues: Succinyl-diaminopimelate desuccinylase (390 aa).

Histidine 74 serves as a coordination point for Zn(2+). Residue aspartate 76 is part of the active site. Residue aspartate 107 participates in Zn(2+) binding. Residue glutamate 140 is the Proton acceptor of the active site. Residues glutamate 141, glutamate 169, and histidine 363 each contribute to the Zn(2+) site.

It belongs to the peptidase M20A family. DapE subfamily. Homodimer. Requires Zn(2+) as cofactor. It depends on Co(2+) as a cofactor.

The catalysed reaction is N-succinyl-(2S,6S)-2,6-diaminopimelate + H2O = (2S,6S)-2,6-diaminopimelate + succinate. It functions in the pathway amino-acid biosynthesis; L-lysine biosynthesis via DAP pathway; LL-2,6-diaminopimelate from (S)-tetrahydrodipicolinate (succinylase route): step 3/3. Its function is as follows. Catalyzes the hydrolysis of N-succinyl-L,L-diaminopimelic acid (SDAP), forming succinate and LL-2,6-diaminopimelate (DAP), an intermediate involved in the bacterial biosynthesis of lysine and meso-diaminopimelic acid, an essential component of bacterial cell walls. The chain is Succinyl-diaminopimelate desuccinylase from Bartonella quintana (strain Toulouse) (Rochalimaea quintana).